The chain runs to 396 residues: Enoyl-[acyl-carrier-protein] reductase [NADH] (396 aa).

Residues 47-52 (GASTGF), 73-74 (FE), 110-111 (DA), and 138-139 (LA) contribute to the NAD(+) site. Tyr224 provides a ligand contact to substrate. The active-site Proton donor is the Tyr234. Residues Lys243 and 272–274 (LVT) contribute to the NAD(+) site.

It belongs to the TER reductase family. Monomer.

The catalysed reaction is a 2,3-saturated acyl-[ACP] + NAD(+) = a (2E)-enoyl-[ACP] + NADH + H(+). Its pathway is lipid metabolism; fatty acid biosynthesis. In terms of biological role, involved in the final reduction of the elongation cycle of fatty acid synthesis (FAS II). Catalyzes the reduction of a carbon-carbon double bond in an enoyl moiety that is covalently linked to an acyl carrier protein (ACP). This Cytophaga hutchinsonii (strain ATCC 33406 / DSM 1761 / CIP 103989 / NBRC 15051 / NCIMB 9469 / D465) protein is Enoyl-[acyl-carrier-protein] reductase [NADH].